The sequence spans 84 residues: UPF0386 protein Oant_1614 (84 aa).

This sequence belongs to the UPF0386 family.

This is UPF0386 protein Oant_1614 from Brucella anthropi (strain ATCC 49188 / DSM 6882 / CCUG 24695 / JCM 21032 / LMG 3331 / NBRC 15819 / NCTC 12168 / Alc 37) (Ochrobactrum anthropi).